Reading from the N-terminus, the 466-residue chain is Argininosuccinate lyase (466 aa).

The protein belongs to the lyase 1 family. Argininosuccinate lyase subfamily.

It localises to the cytoplasm. The enzyme catalyses 2-(N(omega)-L-arginino)succinate = fumarate + L-arginine. It functions in the pathway amino-acid biosynthesis; L-arginine biosynthesis; L-arginine from L-ornithine and carbamoyl phosphate: step 3/3. This chain is Argininosuccinate lyase, found in Ehrlichia ruminantium (strain Gardel).